The primary structure comprises 218 residues: Small ribosomal subunit protein uS3c (218 aa).

A KH type-2 domain is found at 47–118 (VQKHMRVSSG…RLNIAITRVA (72 aa)).

It belongs to the universal ribosomal protein uS3 family. In terms of assembly, part of the 30S ribosomal subunit.

It is found in the plastid. Its subcellular location is the chloroplast. In Illicium oligandrum (Star anise), this protein is Small ribosomal subunit protein uS3c (rps3).